A 239-amino-acid chain; its full sequence is Skn-1 dependent zygotic transcript 1 protein (239 aa).

In terms of tissue distribution, expressed in mesendodermal precursor cells of embryos.

In terms of biological role, may have a role in mesendoderm development during embryogenesis. The chain is Skn-1 dependent zygotic transcript 1 protein (sdz-1) from Caenorhabditis elegans.